The following is a 1735-amino-acid chain: Glutamine and serine-rich protein 1 (1735 aa).

An N-acetylmethionine modification is found at methionine 1. Residues 267 to 297 (AIPSSGYPPSTTKIKSCSTEQPLTSTKTPKP) show a composition bias toward polar residues. Disordered regions lie at residues 267–301 (AIPS…QSII), 414–440 (TRDL…VSQT), 479–518 (SRAQ…FLPA), and 533–561 (LQNN…SKQE). Residues 417 to 440 (LSSVSQSQSYSSGHSQGLSPVSQT) show a composition bias toward low complexity. 3 positions are modified to phosphoserine: serine 586, serine 615, and serine 886. The residue at position 949 (threonine 949) is a Phosphothreonine. A disordered region spans residues 964–1033 (GPSHEVQEQS…EFTLGGDDSG (70 aa)). The span at 971-985 (EQSSGPFKKQSATNL) shows a compositional bias: polar residues. Serine 987 is subject to Phosphoserine. Residues 997–1024 (STLNNNRNQEFVSSSRSISGENATSESE) show a composition bias toward polar residues. Glycyl lysine isopeptide (Lys-Gly) (interchain with G-Cter in SUMO2) cross-links involve residues lysine 1058 and lysine 1083. 2 disordered regions span residues 1073-1132 (KKRA…EKMR) and 1178-1217 (RPGT…DKVD). Residues 1120–1132 (SCHDGYQHQEKMR) show a composition bias toward basic and acidic residues. Serine 1211, serine 1230, serine 1231, and serine 1239 each carry phosphoserine. The disordered stretch occupies residues 1256–1286 (TSDKKKKTEALQVATTSPTANTTGTATTSST). The segment covering 1269-1286 (ATTSPTANTTGTATTSST) has biased composition (low complexity). Threonine 1341 is modified (phosphothreonine). Serine 1348 is subject to Phosphoserine. The tract at residues 1441–1532 (VCSKKPRNKP…SSDDEEFEPP (92 aa)) is disordered. The segment covering 1449–1478 (KPSQTIRTVQAKPSSSSKTSDPLASKTTTT) has biased composition (polar residues). The segment covering 1492-1508 (VKAEPPPKKRKKWKEEF) has biased composition (basic and acidic residues).

In terms of assembly, interacts with TET1.

It localises to the chromosome. In terms of biological role, plays an essential role in the protection and maintenance of transcriptional and developmental programs. Protects many bivalent promoters and poised enhancers from hypermethylation, showing a marked preference for these regulatory elements over other types of promoters or enhancers. Mechanistically, cooperates with TET1 and binds to DNA in a common complex to inhibit the binding of DNMT3A/3B and therefore de novo methylation. In Homo sapiens (Human), this protein is Glutamine and serine-rich protein 1 (QSER1).